We begin with the raw amino-acid sequence, 540 residues long: Testis-specific chromodomain protein Y 1 (540 aa).

The 61-residue stretch at 6 to 66 (FEVEAIVDKR…RQTEKQKKLT (61 aa)) folds into the Chromo domain. Residues 76 to 106 (NNARRRTSRSTKANYSKNSPKTPVTDKHHRS) form a disordered region. Residues 87-97 (KANYSKNSPKT) are compositionally biased toward polar residues.

Interacts (via chromo domain) with histone H3K9me3. Testis-specific. Detected in spermatids (at protein level).

It localises to the nucleus. It carries out the reaction L-lysyl-[protein] + acetyl-CoA = N(6)-acetyl-L-lysyl-[protein] + CoA + H(+). Its function is as follows. Has histone acetyltransferase activity, with a preference for histone H4. The protein is Testis-specific chromodomain protein Y 1 (CDY1) of Homo sapiens (Human).